We begin with the raw amino-acid sequence, 365 residues long: Aminomethyltransferase (365 aa).

Belongs to the GcvT family. As to quaternary structure, the glycine cleavage system is composed of four proteins: P, T, L and H.

The enzyme catalyses N(6)-[(R)-S(8)-aminomethyldihydrolipoyl]-L-lysyl-[protein] + (6S)-5,6,7,8-tetrahydrofolate = N(6)-[(R)-dihydrolipoyl]-L-lysyl-[protein] + (6R)-5,10-methylene-5,6,7,8-tetrahydrofolate + NH4(+). The glycine cleavage system catalyzes the degradation of glycine. This is Aminomethyltransferase from Chlorobium phaeobacteroides (strain DSM 266 / SMG 266 / 2430).